We begin with the raw amino-acid sequence, 128 residues long: Gastrotropin (128 aa).

Position 2 is an N-acetylalanine (Ala-2).

It belongs to the calycin superfamily. Fatty-acid binding protein (FABP) family. In terms of tissue distribution, expressed in ileum.

The protein resides in the cytoplasm. Its subcellular location is the membrane. Functionally, binds to bile acids and is involved in enterohepatic bile acid metabolism. Required for efficient apical to basolateral transport of conjugated bile acids in ileal enterocytes. Stimulates gastric acid and pepsinogen secretion. This Oryctolagus cuniculus (Rabbit) protein is Gastrotropin (FABP6).